A 94-amino-acid chain; its full sequence is Small ribosomal subunit protein bS20 (94 aa).

Belongs to the bacterial ribosomal protein bS20 family.

Functionally, binds directly to 16S ribosomal RNA. The polypeptide is Small ribosomal subunit protein bS20 (Symbiobacterium thermophilum (strain DSM 24528 / JCM 14929 / IAM 14863 / T)).